The following is a 330-amino-acid chain: Succinoglycan biosynthesis protein ExoA (330 aa).

The next 3 membrane-spanning stretches (helical) occupy residues 116–136, 260–280, and 299–319; these read ALAT…FSTF, IAFG…VGVW, and YGPL…AGFW.

Belongs to the glycosyltransferase 2 family.

Its subcellular location is the cell membrane. Its pathway is glycan metabolism; exopolysaccharide biosynthesis. Its function is as follows. Glycosyltransferase required for the synthesis of succinoglycan (EPS I). Needed for the addition of the second sugar (glucose). Catalyzes the formation of a beta-1,3 linkage with the galactose lipid carrier. This chain is Succinoglycan biosynthesis protein ExoA (exoA), found in Rhizobium meliloti (strain 1021) (Ensifer meliloti).